Reading from the N-terminus, the 438-residue chain is Metacaspase-1B (438 aa).

A disordered region spans residues 1–125 (MYYHHSHQGW…SQHFGRGAPS (125 aa)). Positions 29–38 (PYPYSSNAQY) are enriched in low complexity. A compositionally biased stretch (pro residues) spans 39 to 74 (QPPPGPPPTSHYAPPPGPPPSHYYPPPGSYPSPAPS). Active-site residues include H222 and C278.

It belongs to the peptidase C14B family.

In terms of biological role, involved in cell death (apoptosis). In Aspergillus niger (strain ATCC MYA-4892 / CBS 513.88 / FGSC A1513), this protein is Metacaspase-1B (casB).